The chain runs to 664 residues: MMTEKSNGVKSSPANNHNHHPPPSIKANGKDDHRAGSRPQSVAADDDTSPELQRLAEMDTPRRGRGGFQRIVRLVGVIRDWANKNFREEEPRPDSFLERFRGPELQTVTTHQGDDKGGKDGEGKGTKKKFELFVLDPAGDWYYRWLFVIAMPVLYNWCLLVARACFSDLQRNYFVVWLVLDYFSDTVYIADLIIRLRTGFLEQGLLVKDPKKLRDNYIHTLQFKLDVASIIPTDLIYFAVGIHSPEVRFNRLLHFARMFEFFDRTETRTSYPNIFRISNLVLYILVIIHWNACIYYVISKSIGFGVDTWVYPNITDPEYGYLAREYIYCLYWSTLTLTTIGETPPPVKDEEYLFVIFDFLIGVLIFATIVGNVGSMISNMNATRAEFQAKIDAVKHYMQFRKVSKDMEAKVIKWFDYLWTNKKTVDEREVLKNLPAKLRAEIAINVHLSTLKKVRIFQDCEAGLLVELVLKLRPQVFSPGDYICRKGDIGKEMYIIKEGKLAVVADDGVTQYALLSAGSCFGEISILNIKGSKMGNRRTANIRSLGYSDLFCLSKDDLMEAVTEYPDAKKVLEERGREILMKEGLLDENEVAASMEVDVQEKLEQLETNMDTLYTRFARLLAEYTGAQQKLKQRITVLETKMKQNHEDDYLSDGINTPEPTAAE.

The span at 1–10 (MMTEKSNGVK) shows a compositional bias: polar residues. Residues 1 to 51 (MMTEKSNGVKSSPANNHNHHPPPSIKANGKDDHRAGSRPQSVAADDDTSPE) form a disordered region. Residues 1–146 (MMTEKSNGVK…PAGDWYYRWL (146 aa)) are Cytoplasmic-facing. Residues 147–168 (FVIAMPVLYNWCLLVARACFSD) form a helical membrane-spanning segment. Over 169 to 178 (LQRNYFVVWL) the chain is Extracellular. Residues 179 to 199 (VLDYFSDTVYIADLIIRLRTG) traverse the membrane as a helical segment. Residues 200 to 224 (FLEQGLLVKDPKKLRDNYIHTLQFK) are Cytoplasmic-facing. A helical membrane pass occupies residues 225–243 (LDVASIIPTDLIYFAVGIH). The Extracellular segment spans residues 244–248 (SPEVR). A helical transmembrane segment spans residues 249–267 (FNRLLHFARMFEFFDRTET). Over 268–274 (RTSYPNI) the chain is Cytoplasmic. Residues 272 to 380 (PNIFRISNLV…GNVGSMISNM (109 aa)) are ion conduction pathway. Residues 275 to 298 (FRISNLVLYILVIIHWNACIYYVI) form a helical membrane-spanning segment. Residues 299 to 321 (SKSIGFGVDTWVYPNITDPEYGY) lie on the Extracellular side of the membrane. 2 consecutive transmembrane segments (helical) span residues 322-356 (LARE…LFVI) and 357-381 (FDFL…SNMN). Positions 339–342 (TIGE) are selectivity filter. The C-linker stretch occupies residues 382–458 (ATRAEFQAKI…STLKKVRIFQ (77 aa)). Over 382–664 (ATRAEFQAKI…INTPEPTAAE (283 aa)) the chain is Cytoplasmic. The segment at 462 to 582 (AGLLVELVLK…EERGREILMK (121 aa)) is cyclic nucleotide-binding domain. The 3',5'-cyclic GMP site is built by Gly-522, Ser-525, Arg-538, and Thr-539. Residues Arg-538 and Thr-539 each contribute to the 3',5'-cyclic AMP site. A coiled-coil region spans residues 599–653 (VQEKLEQLETNMDTLYTRFARLLAEYTGAQQKLKQRITVLETKMKQNHEDDYLSD).

Belongs to the cyclic nucleotide-gated cation channel (TC 1.A.1.5) family. CNGA2 subfamily. The olfactory cyclic nucleotide-gated channel is an heterotetramer composed of CNGA2, CNGA4 and CNGB1b subunits with 2:1:1 stoichiometry. Olfactory neurons. Widely expressed in brain, enriched in deep cerebellar nuclei, olfactory bulb mitral cells and cerebellar Purkinje neurons. Expressed in olfactory sensory cilia (at protein level).

The protein resides in the cell projection. It is found in the cilium membrane. It carries out the reaction Ca(2+)(in) = Ca(2+)(out). The enzyme catalyses Na(+)(in) = Na(+)(out). It catalyses the reaction K(+)(in) = K(+)(out). The catalysed reaction is NH4(+)(in) = NH4(+)(out). It carries out the reaction Rb(+)(in) = Rb(+)(out). The enzyme catalyses Li(+)(in) = Li(+)(out). It catalyses the reaction Cs(+)(in) = Cs(+)(out). The channel activity is inhibited by L-cis diltiazem. Pore-forming subunit of the olfactory cyclic nucleotide-gated channel. Operates in the cilia of olfactory sensory neurons where chemical stimulation of the odorant is converted to an electrical signal. Mediates odorant-induced cAMP-dependent Ca(2+) influx triggering neuron depolarization. The rise of intracellular Ca(2+) levels potentiates the olfactory response by activating Ca(2+)-dependent Cl(-) channels, but it also serves as a negative feedback signal to desensitize the channel for rapid adaptation to odorants. Conducts cAMP- and cGMP-gated ion currents, with permeability for monovalent and divalent cations. The polypeptide is Cyclic nucleotide-gated channel alpha-2 (Rattus norvegicus (Rat)).